Reading from the N-terminus, the 926-residue chain is DNA mismatch repair protein MutS (926 aa).

The segment at 1-67 is disordered; it reads MAASPNPLQG…NPNQINDLDQ (67 aa). Composition is skewed to polar residues over residues 18-44 and 57-67; these read QSTTNGGKETNNSIGSSENLSNQQLKS and KNPNQINDLDQ. ATP is bound at residue 726-733; it reads GPNASGKS.

It belongs to the DNA mismatch repair MutS family.

In terms of biological role, this protein is involved in the repair of mismatches in DNA. It is possible that it carries out the mismatch recognition step. This protein has a weak ATPase activity. In Prochlorococcus marinus (strain NATL1A), this protein is DNA mismatch repair protein MutS.